Consider the following 120-residue polypeptide: Ribosome-binding factor A (120 aa).

This sequence belongs to the RbfA family. In terms of assembly, monomer. Binds 30S ribosomal subunits, but not 50S ribosomal subunits or 70S ribosomes.

Its subcellular location is the cytoplasm. Its function is as follows. One of several proteins that assist in the late maturation steps of the functional core of the 30S ribosomal subunit. Associates with free 30S ribosomal subunits (but not with 30S subunits that are part of 70S ribosomes or polysomes). Required for efficient processing of 16S rRNA. May interact with the 5'-terminal helix region of 16S rRNA. This is Ribosome-binding factor A from Dictyoglomus thermophilum (strain ATCC 35947 / DSM 3960 / H-6-12).